Consider the following 31-residue polypeptide: Glucagon-5 (31 aa).

Belongs to the glucagon family.

Its subcellular location is the secreted. Functionally, glucagon plays a key role in glucose metabolism and homeostasis. Regulates blood glucose by increasing gluconeogenesis and decreasing glycolysis. This chain is Glucagon-5, found in Huso dauricus (Kaluga sturgeon).